The following is an 853-amino-acid chain: Dynein axonemal assembly factor 5 (853 aa).

At A2 the chain carries N-acetylalanine. HEAT repeat units follow at residues 69-107, 200-238, 240-276, 278-316, 374-412, 597-636, 694-732, 736-774, and 782-820; these read GPWARLLLPRLLRLLSDPAEGCRALAAHLLDLGLRRAAR, HMQSESLIGPLMQTISHQHWKVRVAVIEATGTVIQFGSG, SVDDVLSHFAQRLFDDVPQVRQAVTSVVGGWLLNLRD, YSFLHKLTPLLLSSFSDEMPEIRQTATSLWEKVGLQWQQ, RVKAAQLLPVLLLHAEDHITQHLEIVLRTLHQACTDEEK, GEALQHVIPTLRACLQPSTDPHMRLKLFSILSMMLLRPKD, QEAQETLMPQVLATLEDDSQTTRLMSCRIINMFLKNSGD, PEKFLKVYPELLKRLDDVSNDVRMAAASALLTWLKCIES, and QSSVQFLYRELLVHLDDPESAIQDTVLEVLKEGSVLFPD.

The protein belongs to the DNAAF5 family. As to quaternary structure, interacts with DNAI2; probably involved in outer arm dynein assembly. Expressed in ciliated cells including ependymal cells lining the lateral ventricles and multiciliated epithelium of oviduct ampulla.

It localises to the cytoplasm. Its subcellular location is the cytoplasmic granule. Cytoplasmic protein involved in the delivery of the dynein machinery to the motile cilium. It is required for the assembly of the axonemal dynein inner and outer arms, two structures attached to the peripheral outer doublet A microtubule of the axoneme, that play a crucial role in cilium motility. The polypeptide is Dynein axonemal assembly factor 5 (Mus musculus (Mouse)).